Reading from the N-terminus, the 807-residue chain is Sucrose synthase 1 (807 aa).

The GT-B glycosyltransferase stretch occupies residues 272 to 748 (MMFNVVILSP…GLKRIYEKYT (477 aa)).

This sequence belongs to the glycosyltransferase 1 family. Plant sucrose synthase subfamily. In terms of assembly, forms homotetramers. In endosperm it forms both homotetramers and heterotetramers with SS2, all three possible heterotetramers are formed. In terms of tissue distribution, highly expressed in developing endosperm and in roots and, at lower levels, in coleoptiles and aleurone. In 3 day old roots it is detected in cap cells and along the vascular strand, starting just after the meristemic region. In 9 day old leaves it is found in the phloem. In seeds it is distributed throughout the endosperm and also found in the assimilate-unloading tissues, the nucellar projection, the vascular area and at a high concentration in the chalazal region.

It catalyses the reaction an NDP-alpha-D-glucose + D-fructose = a ribonucleoside 5'-diphosphate + sucrose + H(+). In terms of biological role, sucrose-cleaving enzyme that provides UDP-glucose and fructose for various metabolic pathways. The chain is Sucrose synthase 1 (SS1) from Hordeum vulgare (Barley).